Reading from the N-terminus, the 308-residue chain is MKHLLTLMEFKPHEVEDLLRISRDFKARYMAGEVYTPLFPGRIVMLYFEKPSTRTRLSLTAAAAQLGMQAVYTAPGELQIGRGETIADTMRVVSRYAAAVAARVYKHETLEEMARYSSIPVINALSDRHHPLQALADALTLWERSGRLHGLKVAFVGDVSNNVATSLAVVGAKLGWEVRLVGPKPLWNQKLVEELAEDLAKTGGQIYFTDSMNEVAGVDGVYTDVWVSMGFEKEAEERRRLLKPYQVNQRVMDIAGKRAVFLHCLPAHRGEEVTDEVIDGPQSAVWDQAENRMHTAKAVFAYLLNKRA.

Residues 52–55, Gln-79, Arg-103, and 130–133 each bind carbamoyl phosphate; these read STRT and HPLQ. L-ornithine is bound by residues Asn-162, Asp-224, and 228 to 229; that span reads SM. Carbamoyl phosphate is bound by residues 264-265 and Arg-292; that span reads CL.

It belongs to the aspartate/ornithine carbamoyltransferase superfamily. OTCase family.

It is found in the cytoplasm. The catalysed reaction is carbamoyl phosphate + L-ornithine = L-citrulline + phosphate + H(+). It participates in amino-acid biosynthesis; L-arginine biosynthesis; L-arginine from L-ornithine and carbamoyl phosphate: step 1/3. Reversibly catalyzes the transfer of the carbamoyl group from carbamoyl phosphate (CP) to the N(epsilon) atom of ornithine (ORN) to produce L-citrulline. The protein is Ornithine carbamoyltransferase of Pyrobaculum calidifontis (strain DSM 21063 / JCM 11548 / VA1).